The primary structure comprises 522 residues: F-box only protein 7 (522 aa).

Disordered stretches follow at residues 1–20 and 85–128; these read MKLRVRLQKRTQPLEVPESE and PNLP…HGQV. A ubiquitin-like region spans residues 1 to 88; the sequence is MKLRVRLQKR…EDEMPAPNLP (88 aa). A compositionally biased stretch (polar residues) spans 87-114; sequence LPSSTDSEHSSLQNNDQPPLAATSSQAN. Positions 92–129 are important for interaction with PINK1; that stretch reads DSEHSSLQNNDQPPLAATSSQANIPDEQGSDSSHGQVT. The segment at 129–169 is important for interaction with CDK6; it reads TQYDAWTDDSMEGPSHSAEAVSIQDAMSVEEASGFHPLEPM. The tract at residues 180-324 is important for dimerization and interaction with PSMF1; the sequence is PHSLEALYQS…PLLAFTRQVL (145 aa). Residues 329–375 form the F-box domain; the sequence is VFGLVVLPLELKLRIFRLLDVHSVLALSAVCHDLLIASNDPLLWRCL. The interval 381–522 is important for interaction with CDK6; it reads RDSTIRGPDT…RSADNRLPYL (142 aa). Omega-N-methylarginine is present on residues Arg-431 and Arg-451. The disordered stretch occupies residues 459–522; sequence DPVTSLIPRP…RSADNRLPYL (64 aa). Residues 481-484 carry the RFDP motif motif; sequence RFDP. Arg-518 is subject to Asymmetric dimethylarginine.

In terms of assembly, part of the SCF (SKP1-CUL1-F-box) E3 ubiquitin-protein ligase complex SCF(FBXO7) formed of CUL1, SKP1, RBX1 and FBXO7. Interacts via its C-terminal proline-rich region with DLGAP5. Interacts with BIRC2. Interacts with CDK6 and promotes its interaction with D-type cyclin. Interacts (via the N-terminal Ubl domain) with PRKN. Interacts (via N-terminal region) with PINK1. Interacts with PSMF1.

Its subcellular location is the cytoplasm. The protein resides in the nucleus. It is found in the mitochondrion. The protein localises to the cytosol. It participates in protein modification; protein ubiquitination. In terms of biological role, substrate recognition component of a SCF (SKP1-CUL1-F-box protein) E3 ubiquitin-protein ligase complex which mediates the ubiquitination and subsequent proteasomal degradation of target proteins and plays a role in several biological processes such as cell cycle, cell proliferation, or maintenance of chromosome stability. Recognizes and ubiquitinates BIRC2 and the cell cycle regulator DLGAP5. Plays a role downstream of PINK1 in the clearance of damaged mitochondria via selective autophagy (mitophagy) by targeting PRKN to dysfunctional depolarized mitochondria. Promotes MFN1 ubiquitination. Mediates the ubiquitination and proteasomal degradation of UXT isoform 2, thereby impairing the NF-kappa-B signaling pathway. Inhibits NF-kappa-B pathway also by promoting the ubiquitinatioin of TRAF2. Affects the assembly state and activity of the proteasome in the cells including neurons by ubiquitinating the proteasomal subunit PSMA2 via 'Lys-63'-linked polyubiquitin chains. Promotes 'Lys-48'-linked polyubiquitination SIRT7, leading to the hydrogen peroxide-induced cell death. The protein is F-box only protein 7 (Fbxo7) of Rattus norvegicus (Rat).